We begin with the raw amino-acid sequence, 365 residues long: MKLSDFDFDLPSELIAQYPSSERDNSDLLIAVTPPIKTKFYNIIDYLKEGDLLVFNNSKVIKAKLNLGKNITINLNQKLSDDNWSAFAKPARKLHVNDEFYFDNHKVIITEKLAMGEIKVKFELNDISVFEFLNKYGEMPLPVYIRRSHSLCHPVATTTGSKTYLNNDWIPWSNHGMTNTQNDNDRYQTVYSQIEGSVAAPTAGLHFTKDILDKLKAEGIQATFLTLHVGAGTFLPVKTENIHEHKMHTEYCSITPDTAEIINKAKQEGKRIIAVGTTTLRTLESSCNNGIVKAGSFKTDIFITPGFKFQTADMLLTNFHFPKSTLFMLICAFAGFKEMHELYKYAIKEAMRFFSYGDATLLCRK.

It belongs to the QueA family. As to quaternary structure, monomer.

The protein resides in the cytoplasm. The enzyme catalyses 7-aminomethyl-7-carbaguanosine(34) in tRNA + S-adenosyl-L-methionine = epoxyqueuosine(34) in tRNA + adenine + L-methionine + 2 H(+). Its pathway is tRNA modification; tRNA-queuosine biosynthesis. Its function is as follows. Transfers and isomerizes the ribose moiety from AdoMet to the 7-aminomethyl group of 7-deazaguanine (preQ1-tRNA) to give epoxyqueuosine (oQ-tRNA). This is S-adenosylmethionine:tRNA ribosyltransferase-isomerase from Rickettsia conorii (strain ATCC VR-613 / Malish 7).